Here is a 96-residue protein sequence, read N- to C-terminus: Co-chaperonin GroES (96 aa).

This sequence belongs to the GroES chaperonin family. Heptamer of 7 subunits arranged in a ring. Interacts with the chaperonin GroEL.

It is found in the cytoplasm. In terms of biological role, together with the chaperonin GroEL, plays an essential role in assisting protein folding. The GroEL-GroES system forms a nano-cage that allows encapsulation of the non-native substrate proteins and provides a physical environment optimized to promote and accelerate protein folding. GroES binds to the apical surface of the GroEL ring, thereby capping the opening of the GroEL channel. In Shewanella oneidensis (strain ATCC 700550 / JCM 31522 / CIP 106686 / LMG 19005 / NCIMB 14063 / MR-1), this protein is Co-chaperonin GroES.